The primary structure comprises 494 residues: Tripartite motif-containing protein 5 (494 aa).

A2 carries the N-acetylalanine modification. The RING-type zinc finger occupies 15 to 59 (CPICLELLTEPLSLDCGHSFCQACITANHKESTPHQGERSCPLCR). S86 bears the Phosphoserine mark. The segment at 91–132 (QKVGHCARHGEKLLLFCEQDGNVICWLCERSQEHRGHHTLLV) adopts a B box-type zinc-finger fold. The Zn(2+) site is built by C96, H99, C118, and H124. Residues 131 to 223 (LVEEVAEKYQ…RLVQSESDMV (93 aa)) adopt a coiled-coil conformation. The required for interaction with GABARAP and for autophagy stretch occupies residues 186 to 199 (FKQLRDILDCEESK). The B30.2/SPRY domain occupies 280 to 494 (PDLKAMLQAF…LPMTLCSPSS (215 aa)).

This sequence belongs to the TRIM/RBCC family. Can form homodimers and homotrimers. In addition to lower-order dimerization, also exhibits a higher-order multimerization and both low- and high-order multimerizations are essential for its restriction activity. Interacts with BTBD1 and BTBD2. Interacts with PSMC4, PSMC5, PSMD7 and HSPA8/HSC70. Interacts (via B30.2/SPRY domain) with HSPA1A/B. Interacts with PSMC2, MAP3K7/TAK1, TAB2 and TAB3. Interacts with SQSTM1. Interacts with TRIM6 and TRIM34. Interacts with ULK1 (phosphorylated form), GABARAP, GABARAPL1, GABARAPL2, MAP1LC3A, MAP1LC3C and BECN1. Degraded in a proteasome-independent fashion in the absence of viral infection but in a proteasome-dependent fashion following exposure to restriction sensitive virus. Post-translationally, autoubiquitinated in a RING finger- and UBE2D2-dependent manner. Monoubiquitinated by TRIM21. Deubiquitinated by Yersinia YopJ. Ubiquitination may not lead to proteasomal degradation.

The protein localises to the cytoplasm. It is found in the nucleus. The catalysed reaction is S-ubiquitinyl-[E2 ubiquitin-conjugating enzyme]-L-cysteine + [acceptor protein]-L-lysine = [E2 ubiquitin-conjugating enzyme]-L-cysteine + N(6)-ubiquitinyl-[acceptor protein]-L-lysine.. It functions in the pathway protein modification; protein ubiquitination. Its function is as follows. Capsid-specific restriction factor that prevents infection from non-host-adapted retroviruses. Blocks viral replication early in the life cycle, after viral entry but before reverse transcription. In addition to acting as a capsid-specific restriction factor, also acts as a pattern recognition receptor that activates innate immune signaling in response to the retroviral capsid lattice. Binding to the viral capsid triggers its E3 ubiquitin ligase activity, and in concert with the heterodimeric ubiquitin conjugating enzyme complex UBE2V1-UBE2N (also known as UBC13-UEV1A complex) generates 'Lys-63'-linked polyubiquitin chains, which in turn are catalysts in the autophosphorylation of the MAP3K7/TAK1 complex (includes TAK1, TAB2, and TAB3). Activation of the MAP3K7/TAK1 complex by autophosphorylation results in the induction and expression of NF-kappa-B and MAPK-responsive inflammatory genes, thereby leading to an innate immune response in the infected cell. Plays a role in regulating autophagy through activation of autophagy regulator BECN1 by causing its dissociation from its inhibitors BCL2 and TAB2. The sequence is that of Tripartite motif-containing protein 5 (TRIM5) from Saguinus labiatus (Red-chested mustached tamarin).